The following is a 343-amino-acid chain: Ribonucleoside-diphosphate reductase small subunit (343 aa).

Fe cation contacts are provided by Asp-101, Glu-131, and His-134. Tyr-138 is an active-site residue. Residues 188–208 (ILMILIEGIFFSASFAAIAYL) form a helical membrane-spanning segment. Residues Glu-194, Glu-228, and His-231 each coordinate Fe cation.

Belongs to the ribonucleoside diphosphate reductase small chain family. As to quaternary structure, heterotetramer composed of a homodimer of the large subunit (R1) and a homodimer of the small subunit (R2). Larger multisubunit protein complex are also active, composed of (R1)n(R2)n. Fe cation is required as a cofactor.

The protein localises to the host membrane. The catalysed reaction is a 2'-deoxyribonucleoside 5'-diphosphate + [thioredoxin]-disulfide + H2O = a ribonucleoside 5'-diphosphate + [thioredoxin]-dithiol. Its function is as follows. Ribonucleoside-diphosphate reductase holoenzyme provides the precursors necessary for viral DNA synthesis. Allows virus growth in non-dividing cells, as well as reactivation from latency in infected hosts. Catalyzes the biosynthesis of deoxyribonucleotides from the corresponding ribonucleotides. This Gallid herpesvirus 2 (strain Chicken/Md5/ATCC VR-987) (GaHV-2) protein is Ribonucleoside-diphosphate reductase small subunit.